Reading from the N-terminus, the 237-residue chain is MSKPIYNRILLKLSGEALQGDEGFGIDPSILDRMALEIKELVEMGVEVGVVLGGGNLFRGAKLAKAGMNRVVGDHMGMLATVMNGLAMRDALHRAEVNAKLMSAFQLNGICDTYNWSEAIKMLREKRVVIFSAGTGSPFFTTDSAGCLRGIEIEADVVLKATKVEGVYDKDPSKFNDAKLYNTLTYAEVIDQELKVMDLAAFTLARDHNMPIRVFNMGKPGALREVVMGTTEGTTIS.

An ATP-binding site is contributed by Lys12–Gly15. Residues Gly20–Gly25 form an involved in allosteric activation by GTP region. Gly54 provides a ligand contact to UMP. Positions 55 and 59 each coordinate ATP. Residues Asp74 and Thr135–Thr142 each bind UMP. Residues Thr162, Tyr168, and Asp171 each contribute to the ATP site.

The protein belongs to the UMP kinase family. Homohexamer.

It is found in the cytoplasm. The catalysed reaction is UMP + ATP = UDP + ADP. Its pathway is pyrimidine metabolism; CTP biosynthesis via de novo pathway; UDP from UMP (UMPK route): step 1/1. With respect to regulation, allosterically activated by GTP. Inhibited by UTP. Functionally, catalyzes the reversible phosphorylation of UMP to UDP. This chain is Uridylate kinase, found in Haemophilus ducreyi (strain 35000HP / ATCC 700724).